The sequence spans 1390 residues: MVKEQFRETDVAKKISHICFGMKSPEEMRQQAHIQVVSKNLYSQDNQHAPLLYGVLDHRMGTSEKDRPCETCGKNLADCLGHYGYIDLELPCFHVGYFRAVIGILQMICKTCCHIMLSQEEKKQFLDYLKRPGLTYLQKRGLKKKISDKCRKKNICHHCGAFNGTVKKCGLLKIIHEKYKTNKKVVDPIVSNFLQSFETAIEHNKEVEPLLGRAQENLNPLVVLNLFKRIPAEDVPLLLMNPEAGKPSDLILTRLLVPPLCIRPSVVSDLKSGTNEDDLTMKLTEIIFLNDVIKKHRISGAKTQMIMEDWDFLQLQCALYINSELSGIPLNMAPKKWTRGFVQRLKGKQGRFRGNLSGKRVDFSGRTVISPDPNLRIDEVAVPVHVAKILTFPEKVNKANINFLRKLVQNGPEVHPGANFIQQRHTQMKRFLKYGNREKMAQELKYGDIVERHLIDGDVVLFNRQPSLHKLSIMAHLARVKPHRTFRFNECVCTPYNADFDGDEMNLHLPQTEEAKAEALVLMGTKANLVTPRNGEPLIAAIQDFLTGAYLLTLKDTFFDRAKACQIIASILVGKDEKIKVRLPPPTILKPVTLWTGKQIFSVILRPSDDNPVRANLRTKGKQYCGKGEDLCANDSYVTIQNSELMSGSMDKGTLGSGSKNNIFYILLRDWGQNEAADAMSRLARLAPVYLSNRGFSIGIGDVTPGQGLLKAKYELLNAGYKKCDEYIEALNTGKLQQQPGCTAEETLEALILKELSVIRDHAGSACLRELDKSNSPLTMALCGSKGSFINISQMIACVGQQAISGSRVPDGFENRSLPHFEKHSKLPAAKGFVANSFYSGLTPTEFFFHTMAGREGLVDTAVKTAETGYMQRRLVKSLEDLCSQYDLTVRSSTGDIIQFIYGGDGLDPAAMEGKDEPLEFKRVLDNIKAVFPCPSEPALSKNELILTTESIMKKSEFLCCQDSFLQEIKKFIKGVSEKIKKTRDKYGINDNGTTEPRVLYQLDRITPTQVEKFLETCRDKYMRAQMEPGSAVGALCAQSIGEPGTQMTLKTFHFAGVASMNITLGVPRIKEIINASKAISTPIITAQLDKDDDADYARLVKGRIEKTLLGEISEYIEEVFLPDDCFILVKLSLERIRLLRLEVNAETVRYSICTSKLRVKPGDVAVHGEAVVCVTPRENSKSSMYYVLQFLKEDLPKVVVQGIPEVSRAVIHIDEQSGKEKYKLLVEGDNLRAVMATHGVKGTRTTSNNTYEVEKTLGIEAARTTIINEIQYTMVNHGMSIDRRHVMLLSDLMTYKGEVLGITRFGLAKMKESVLMLASFEKTADHLFDAAYFGQKDSVCGVSECIIMGIPMNIGTGLFKLLHKADRDPNPPKRPLIFDTNEFHIPLVT.

6 residues coordinate Zn(2+): Cys-69, Cys-72, Cys-79, His-82, Cys-109, and Cys-112. Lys-144 contributes to the DNA binding site. Positions 156 and 159 each coordinate Zn(2+). DNA is bound by residues Lys-167, Ser-326, Lys-348, Arg-353, Arg-360, and Arg-366. Position 445 is an N6-acetyllysine (Lys-445). Arg-464 lines the RNA pocket. Mg(2+) contacts are provided by Asp-499, Asp-501, and Asp-503. Asp-503 lines the RNA pocket. The tract at residues 843 to 884 (TPTEFFFHTMAGREGLVDTAVKTAETGYMQRRLVKSLEDLCS) is bridging helix. The trigger loop stretch occupies residues 1029-1070 (PGSAVGALCAQSIGEPGTQMTLKTFHFAGVASMNITLGVPRI). Residues Arg-1159, Arg-1305, and Lys-1323 each contribute to the DNA site.

The protein belongs to the RNA polymerase beta' chain family. As to quaternary structure, component of the RNA polymerase III (Pol III) (Pol III) complex consisting of 17 subunits: a ten-subunit catalytic core composed of POLR3A/RPC1, POLR3B/RPC2, POLR1C/RPAC1, POLR1D/RPAC2, POLR3K/RPC10, POLR2E/RPABC1, POLR2F/RPABC2, POLR2H/RPABC3, POLR2K/RPABC4 and POLR2L/RPABC5; a mobile stalk composed of two subunits POLR3H/RPC8 and CRCP/RPC9, protruding from the core and functioning primarily in transcription initiation; and additional subunits homologous to general transcription factors of the RNA polymerase II machinery, POLR3C/RPC3-POLR3F/RPC6-POLR3G/RPC7 heterotrimer required for transcription initiation and POLR3D/RPC4-POLR3E/RPC5 heterodimer involved in both transcription initiation and termination. Pol III exists as two alternative complexes defined by the mutually exclusive incorporation of subunit POLR3G/RPC7alpha or POLR3GL/RPC7beta. The presence of POLR3G/RPC7alpha or POLR3GL/RPC7beta differentially modulates the transcription potential of Pol III, with POLR3G/RPC7alpha specifically associated with transcription of snaR-A non-coding RNAs. As part of the RNA polymerase III complex, interacts with PKP2. Requires Mg(2+) as cofactor. In terms of tissue distribution, expressed in the brain, in the cortex and the white matter (at protein level).

The protein localises to the nucleus. Its subcellular location is the cytoplasm. It localises to the cytosol. It catalyses the reaction RNA(n) + a ribonucleoside 5'-triphosphate = RNA(n+1) + diphosphate. Functionally, catalytic core component of RNA polymerase III (Pol III), a DNA-dependent RNA polymerase which synthesizes small non-coding RNAs using the four ribonucleoside triphosphates as substrates. Synthesizes 5S rRNA, snRNAs, tRNAs and miRNAs from at least 500 distinct genomic loci. Pol III-mediated transcription cycle proceeds through transcription initiation, transcription elongation and transcription termination stages. During transcription initiation, Pol III is recruited to DNA promoters type I, II or III with the help of general transcription factors and other specific initiation factors. Once the polymerase has escaped from the promoter it enters the elongation phase during which RNA is actively polymerized, based on complementarity with the template DNA strand. Transcription termination involves the release of the RNA transcript and polymerase from the DNA. Forms Pol III active center together with the second largest subunit POLR3B/RPC2. Appends one nucleotide at a time to the 3' end of the nascent RNA, with POLR3A/RPC1 contributing a Mg(2+)-coordinating DxDGD motif, and POLR3B/RPC2 participating in the coordination of a second Mg(2+) ion and providing lysine residues believed to facilitate Watson-Crick base pairing between the incoming nucleotide and template base. Typically, Mg(2+) ions direct a 5' nucleoside triphosphate to form a phosphodiester bond with the 3' hydroxyl of the preceding nucleotide of the nascent RNA, with the elimination of pyrophosphate. Pol III plays a key role in sensing and limiting infection by intracellular bacteria and DNA viruses. Acts as a nuclear and cytosolic DNA sensor involved in innate immune response. Can sense non-self dsDNA that serves as template for transcription into dsRNA. The non-self RNA polymerase III transcripts, such as Epstein-Barr virus-encoded RNAs (EBERs) induce type I interferon and NF-kappa-B through the RIG-I pathway. The chain is DNA-directed RNA polymerase III subunit RPC1 from Homo sapiens (Human).